Reading from the N-terminus, the 403-residue chain is ATP phosphoribosyltransferase regulatory subunit (403 aa).

The protein belongs to the class-II aminoacyl-tRNA synthetase family. HisZ subfamily. In terms of assembly, heteromultimer composed of HisG and HisZ subunits.

It is found in the cytoplasm. The protein operates within amino-acid biosynthesis; L-histidine biosynthesis; L-histidine from 5-phospho-alpha-D-ribose 1-diphosphate: step 1/9. Its function is as follows. Required for the first step of histidine biosynthesis. May allow the feedback regulation of ATP phosphoribosyltransferase activity by histidine. The protein is ATP phosphoribosyltransferase regulatory subunit of Crocosphaera subtropica (strain ATCC 51142 / BH68) (Cyanothece sp. (strain ATCC 51142)).